Consider the following 105-residue polypeptide: uncharacterized protein (105 aa).

Transmembrane regions (helical) follow at residues 26 to 46 (NVLI…CIAI) and 66 to 86 (SALA…TLAI).

It is found in the cell membrane. This is an uncharacterized protein from Mycoplasma pneumoniae (strain ATCC 29342 / M129 / Subtype 1) (Mycoplasmoides pneumoniae).